The primary structure comprises 270 residues: UPF0354 protein BCAH820_4810 (270 aa).

Belongs to the UPF0354 family.

The polypeptide is UPF0354 protein BCAH820_4810 (Bacillus cereus (strain AH820)).